A 142-amino-acid chain; its full sequence is Hemoglobin subunit theta-1 (142 aa).

The 141-residue stretch at 2 to 142 (ALSAEDRALV…VISALASEYR (141 aa)) folds into the Globin domain. His59 and His88 together coordinate heme b.

The protein belongs to the globin family.

This Pongo pygmaeus (Bornean orangutan) protein is Hemoglobin subunit theta-1 (HBQ1).